The sequence spans 154 residues: 6,7-dimethyl-8-ribityllumazine synthase (154 aa).

5-amino-6-(D-ribitylamino)uracil contacts are provided by residues F22, 56 to 58, and 80 to 82; these read AFE and AVI. 85 to 86 lines the (2S)-2-hydroxy-3-oxobutyl phosphate pocket; the sequence is AT. The Proton donor role is filled by H88. F113 contributes to the 5-amino-6-(D-ribitylamino)uracil binding site. R127 contributes to the (2S)-2-hydroxy-3-oxobutyl phosphate binding site.

It belongs to the DMRL synthase family.

It catalyses the reaction (2S)-2-hydroxy-3-oxobutyl phosphate + 5-amino-6-(D-ribitylamino)uracil = 6,7-dimethyl-8-(1-D-ribityl)lumazine + phosphate + 2 H2O + H(+). It functions in the pathway cofactor biosynthesis; riboflavin biosynthesis; riboflavin from 2-hydroxy-3-oxobutyl phosphate and 5-amino-6-(D-ribitylamino)uracil: step 1/2. Functionally, catalyzes the formation of 6,7-dimethyl-8-ribityllumazine by condensation of 5-amino-6-(D-ribitylamino)uracil with 3,4-dihydroxy-2-butanone 4-phosphate. This is the penultimate step in the biosynthesis of riboflavin. This Clostridium botulinum (strain ATCC 19397 / Type A) protein is 6,7-dimethyl-8-ribityllumazine synthase.